The sequence spans 391 residues: Na(+)/H(+) antiporter NhaA 1 (391 aa).

The next 11 helical transmembrane spans lie at 25–45 (AGGI…NSPL), 56–76 (VWLG…IFFL), 98–118 (ALPG…YIAI), 128–148 (GWAI…SLLG), 157–177 (VFLA…IAFF), 180–200 (AGLN…LIVM), 208–228 (LLPY…SGVH), 264–284 (VAFA…LAGI), 297–317 (VALG…VLAI), 335–355 (GVAM…NLAF), and 364–384 (EVKV…IVLL).

This sequence belongs to the NhaA Na(+)/H(+) (TC 2.A.33) antiporter family.

It localises to the cell inner membrane. It carries out the reaction Na(+)(in) + 2 H(+)(out) = Na(+)(out) + 2 H(+)(in). Na(+)/H(+) antiporter that extrudes sodium in exchange for external protons. This is Na(+)/H(+) antiporter NhaA 1 from Pseudomonas syringae pv. syringae (strain B728a).